The sequence spans 325 residues: Leucine-rich repeat protein FLOR 1 (325 aa).

10 LRR repeats span residues 65–88 (NRRVTGLSVTSGEVSGQISYQIGD), 89–114 (LVDLRTLDFSYLPHLTGNIPRTITKL), 115–140 (KNLNTLYLKHTSLSGPIPDYISELKS), 142–162 (TFLDLSFNQFTGPIPGSLSQM), 163–185 (PKLEAIQINDNKLTGSIPNSFGS), 187–211 (VGNVPNLYLSNNKLSGKIPESLSKY), 213–233 (FNAVDLSGNGFEGDAFMFFGR), 234–256 (NKTTVRVDLSRNMFNFDLVKVKF), 257–280 (ARSIVSLDLSQNHIYGKIPPALTK), and 281–305 (LHLEHFNVSDNHLCGKIPSGGLLQT).

This sequence belongs to the polygalacturonase-inhibiting protein family. As to quaternary structure, interacts with MADS domain transcription factors during flower development. Component of a complex made of FLOR1, VSP1 and AGAMOUS (AG). Binds directly with AG. Confined to flowers and inflorescences (e.g. inflorescence meristems, floral meristems, stamens and carpels).

It is found in the cytoplasm. It localises to the nucleus. Its subcellular location is the perinuclear region. The protein localises to the cell membrane. Promotes flowering transition in long days (LD). In Arabidopsis thaliana (Mouse-ear cress), this protein is Leucine-rich repeat protein FLOR 1.